The primary structure comprises 219 residues: Uracil-DNA glycosylase (219 aa).

The Proton acceptor role is filled by Asp59.

This sequence belongs to the uracil-DNA glycosylase (UDG) superfamily. UNG family.

The protein resides in the cytoplasm. The catalysed reaction is Hydrolyzes single-stranded DNA or mismatched double-stranded DNA and polynucleotides, releasing free uracil.. Its function is as follows. Excises uracil residues from the DNA which can arise as a result of misincorporation of dUMP residues by DNA polymerase or due to deamination of cytosine. The protein is Uracil-DNA glycosylase of Staphylococcus haemolyticus (strain JCSC1435).